The chain runs to 612 residues: UvrABC system protein C (612 aa).

Residues 20-98 (THSGVYRMLD…IKQHRPKYNI (79 aa)) form the GIY-YIG domain. A UVR domain is found at 208 to 243 (SSVLEEISAKMYQASEDMEYEKAQVYRDQLVVLRKL).

The protein belongs to the UvrC family. Interacts with UvrB in an incision complex.

The protein localises to the cytoplasm. In terms of biological role, the UvrABC repair system catalyzes the recognition and processing of DNA lesions. UvrC both incises the 5' and 3' sides of the lesion. The N-terminal half is responsible for the 3' incision and the C-terminal half is responsible for the 5' incision. The chain is UvrABC system protein C from Francisella tularensis subsp. holarctica (strain FTNF002-00 / FTA).